Here is a 119-residue protein sequence, read N- to C-terminus: Ribonuclease pancreatic (119 aa).

Pyrrolidone carboxylic acid is present on Gln1. Residue His10 is the Proton acceptor of the active site. 3 disulfide bridges follow: Cys25-Cys80, Cys39-Cys91, and Cys57-Cys106. A substrate-binding site is contributed by 40 to 44 (KTRNT). Catalysis depends on His113, which acts as the Proton donor.

This sequence belongs to the pancreatic ribonuclease family. Monomer. Interacts with and forms tight 1:1 complexes with RNH1. Dimerization of two such complexes may occur. Interaction with RNH1 inhibits this protein. In terms of tissue distribution, pancreas.

It localises to the secreted. The enzyme catalyses an [RNA] containing cytidine + H2O = an [RNA]-3'-cytidine-3'-phosphate + a 5'-hydroxy-ribonucleotide-3'-[RNA].. It catalyses the reaction an [RNA] containing uridine + H2O = an [RNA]-3'-uridine-3'-phosphate + a 5'-hydroxy-ribonucleotide-3'-[RNA].. Its function is as follows. Endonuclease that catalyzes the cleavage of RNA on the 3' side of pyrimidine nucleotides. Acts on single-stranded and double-stranded RNA. This Iguana iguana (Common iguana) protein is Ribonuclease pancreatic.